The following is a 178-amino-acid chain: Conodipine-P1 (178 aa).

The signal sequence occupies residues 1 to 24 (MKLLAPVLWAMAALGVTWLVAVDS). A 4-hydroxyproline; partial mark is found at proline 38, proline 42, and proline 49. Residue histidine 54 is part of the active site. Residues 98-130 (KREVTSHRATSIAHSRLWKTALDQKSFLNRKAR) constitute a propeptide, interchain peptide. Glutamine 131 is subject to Pyrrolidone carboxylic acid. The residue at position 137 (proline 137) is a 4-hydroxyproline; partial.

Belongs to the phospholipase A2 family. Group IX subfamily. Heterodimer of an alpha and a beta chain; probably disulfide-linked. Requires Ca(2+) as cofactor. As to expression, expressed by the venom duct.

The protein resides in the secreted. The catalysed reaction is a 1,2-diacyl-sn-glycero-3-phosphocholine + H2O = a 1-acyl-sn-glycero-3-phosphocholine + a fatty acid + H(+). In terms of biological role, catalyzes the calcium-dependent hydrolysis of the 2-acyl groups in 3-sn-phosphoglycerides. This is Conodipine-P1 from Conus purpurascens (Purple cone).